A 127-amino-acid chain; its full sequence is UPF0325 protein VIBHAR_03240 (127 aa).

The protein belongs to the UPF0325 family.

The sequence is that of UPF0325 protein VIBHAR_03240 from Vibrio campbellii (strain ATCC BAA-1116).